The sequence spans 183 residues: Histone deacetylase complex subunit SAP30L (183 aa).

Met-1 carries the N-acetylmethionine modification. The span at 1–10 shows a compositional bias: acidic residues; sequence MNGFSTEEDS. The segment at 1–23 is disordered; sequence MNGFSTEEDSREGPPAAPAAAAP. Disulfide bonds link Cys-29–Cys-30 and Cys-38–Cys-74. An Atypical zinc finger spans residues 29 to 77; that stretch reads CCLIEDGERCVRPAGNASFSKRVQKSISQKKLKLDIDKSVRHLYICDFH. A Glycyl lysine isopeptide (Lys-Gly) (interchain with G-Cter in SUMO2) cross-link involves residue Lys-49. The interval 85-105 is disordered; it reads RNKRKRKTSDDGGDSPEHDTD. The short motif at 86 to 91 is the Nuclear localization signal (NLS) element; that stretch reads NKRKRK. Residues 88–90 are important for DNA and phosphoinositide binding; that stretch reads RKR. Thr-92 carries the post-translational modification Phosphothreonine. Ser-93 and Ser-99 each carry phosphoserine. Thr-104 is subject to Phosphothreonine. Residues Lys-155, Lys-166, and Lys-175 each participate in a glycyl lysine isopeptide (Lys-Gly) (interchain with G-Cter in SUMO2) cross-link.

This sequence belongs to the SAP30 family. In terms of assembly, interacts with components of the histone deacetylase complex SIN3A, HDAC1 and HDAC2. Binds histones and nucleosomes. Interacts with FEZ1. Detected in brain and ovary, and at lower levels in heart, small intestine, lung, kidney, skeletal muscle, stomach and spleen (at protein level). Ubiquitous; expressed in all tissues tested with highest levels in testis.

The protein localises to the nucleus. Its subcellular location is the nucleolus. In terms of biological role, functions as a transcription repressor, probably via its interaction with histone deacetylase complexes. Involved in the functional recruitment of the class 1 Sin3-histone deacetylase complex (HDAC) to the nucleolus. Binds DNA, apparently without sequence-specificity, and bends bound double-stranded DNA. Binds phosphoinositol phosphates (phosphoinositol 3-phosphate, phosphoinositol 4-phosphate and phosphoinositol 5-phosphate) via the same basic sequence motif that mediates DNA binding and nuclear import. Functionally, functions as a transcription repressor; isoform 2 has lower transcription repressor activity than isoform 1 and isoform 3. Functions as a transcription repressor; its activity is marginally lower than that of isoform 1. This is Histone deacetylase complex subunit SAP30L (SAP30L) from Homo sapiens (Human).